A 1021-amino-acid chain; its full sequence is SWI/SNF-related matrix-associated actin-dependent regulator of chromatin subfamily A containing DEAD/H box 1 (1021 aa).

Met-1 is subject to N-acetylmethionine. Disordered regions lie at residues 1 to 82 (MNLF…SLSC) and 124 to 151 (SEPS…EDLS). The segment covering 7-19 (DRFRFEKRSKIEE) has biased composition (basic and acidic residues). Low complexity predominate over residues 22-39 (EAAPQPSQARPSSPISLS). Residue Thr-54 is modified to Phosphothreonine. Position 57 is a phosphoserine (Ser-57). Lys-77 is covalently cross-linked (Glycyl lysine isopeptide (Lys-Gly) (interchain with G-Cter in SUMO2)). Phosphoserine occurs at positions 79, 124, 127, 132, 144, 145, and 151. Residues 156 to 198 (LKDAKLQTLKELFPQRSDSDLLKLIESTSTMDGAIAAALLMFG) form the CUE 1 domain. The disordered stretch occupies residues 201 to 246 (GGGPRKRKLSSSSEEDDVNDDQSVKQPRGDRGEESNESAEASSNWE). 4 positions are modified to phosphoserine: Ser-210, Ser-213, Ser-235, and Ser-238. Positions 247 to 290 (KQESIVLKLQKEFPNFDKQELREVLKEHEWMYTEALESLKVFAE) constitute a CUE 2 domain. Ser-298 carries the phosphoserine modification. Residues 329-366 (VKPQNGFNKKRKKNVFNPKKAVEDSEYDSGSDAGSSLD) are disordered. Residues Lys-330 and Lys-466 each participate in a glycyl lysine isopeptide (Lys-Gly) (interchain with G-Cter in SUMO2) cross-link. The Helicase ATP-binding domain occupies 504 to 672 (ALVHKHGLNG…MSLLNFVMPH (169 aa)). 516-524 (ADEMGLGKT) provides a ligand contact to ATP. Residues 623-626 (DEGH) carry the DEGH box motif. A Nuclear localization signal motif is present at residues 716–733 (RRVKEEVLKLLPPKKDRI). Residue Lys-719 forms a Glycyl lysine isopeptide (Lys-Gly) (interchain with G-Cter in SUMO2) linkage. In terms of domain architecture, Helicase C-terminal spans 853–1005 (ALGCILSELK…MTTVDEADEG (153 aa)). Residue 892 to 899 (YLRLDGKT) participates in ATP binding. Lys-991 participates in a covalent cross-link: Glycyl lysine isopeptide (Lys-Gly) (interchain with G-Cter in SUMO2). Positions 1000–1003 (DEAD) match the DEAD box motif.

Belongs to the SNF2/RAD54 helicase family. In terms of assembly, binds to DNA preferentially in the vicinity of transcriptional start sites. Interacts with MSH2 and TRIM28. Part of a complex composed of TRIM28, HDAC1, HDAC2 and EHMT2. Interacts with PCNA.

The protein resides in the nucleus. Its subcellular location is the chromosome. The catalysed reaction is ATP + H2O = ADP + phosphate + H(+). DNA helicase that possesses intrinsic ATP-dependent nucleosome-remodeling activity and is both required for DNA repair and heterochromatin organization. Promotes DNA end resection of double-strand breaks (DSBs) following DNA damage: probably acts by weakening histone DNA interactions in nucleosomes flanking DSBs. Required for the restoration of heterochromatin organization after replication. Acts at replication sites to facilitate the maintenance of heterochromatin by directing H3 and H4 histones deacetylation, H3 'Lys-9' trimethylation (H3K9me3) and restoration of silencing. The chain is SWI/SNF-related matrix-associated actin-dependent regulator of chromatin subfamily A containing DEAD/H box 1 (Smarcad1) from Mus musculus (Mouse).